Consider the following 190-residue polypeptide: Putative acetyltransferase DDB_G0275913 (190 aa).

This sequence belongs to the transferase hexapeptide repeat family.

This is Putative acetyltransferase DDB_G0275913 from Dictyostelium discoideum (Social amoeba).